The sequence spans 440 residues: Protein CANDIDATE G-PROTEIN COUPLED RECEPTOR 7 (440 aa).

Residues 1-24 form the signal peptide; the sequence is MAKMPLSVVVFLLFSAAFLAVSMA. N-linked (GlcNAc...) asparagine glycosylation is found at asparagine 124 and asparagine 162. Transmembrane regions (helical) follow at residues 175–195, 207–227, 243–263, 281–301, and 315–335; these read LPTLYSFFFLCYVAFLGFWSY, IHLLMAGLLLIKSLNLICAAE, ILFYIFQFIRVVLLFTVIILI, VLIIVIPLQVLANIASIVIGE, and VFLLVDIICCCAIIFPIVWSI. Asparagine 351 is a glycosylation site (N-linked (GlcNAc...) asparagine). The next 2 membrane-spanning stretches (helical) occupy residues 363–383 and 390–410; these read IVVIGYLYFTRIVVFALKTIA and VSFAAEEIVSLVFYVIMFHMF.

It belongs to the LU7TM family.

The protein localises to the membrane. Functionally, plays a role in plants and microbes interactions. G-protein coupled receptor involved in root growth mediated by the bacterial quorum-sensing signals N-acyl-homoserine lactones (AHLs). This chain is Protein CANDIDATE G-PROTEIN COUPLED RECEPTOR 7, found in Arabidopsis thaliana (Mouse-ear cress).